Consider the following 339-residue polypeptide: Methylthioribose-1-phosphate isomerase (339 aa).

Substrate-binding positions include 52 to 54, Arg-89, and Gln-188; that span reads RGA. Asp-229 serves as the catalytic Proton donor. Position 239-240 (239-240) interacts with substrate; sequence NK.

The protein belongs to the eIF-2B alpha/beta/delta subunits family. MtnA subfamily.

The catalysed reaction is 5-(methylsulfanyl)-alpha-D-ribose 1-phosphate = 5-(methylsulfanyl)-D-ribulose 1-phosphate. It participates in amino-acid biosynthesis; L-methionine biosynthesis via salvage pathway; L-methionine from S-methyl-5-thio-alpha-D-ribose 1-phosphate: step 1/6. Its function is as follows. Catalyzes the interconversion of methylthioribose-1-phosphate (MTR-1-P) into methylthioribulose-1-phosphate (MTRu-1-P). This is Methylthioribose-1-phosphate isomerase from Anaeromyxobacter sp. (strain K).